The sequence spans 798 residues: Cold shock domain-containing protein E1 (798 aa).

A CSD 1 domain is found at 26–87; sequence ETGVIEKLLT…RTGKPIAIKL (62 aa). Position 81 is an N6-acetyllysine (lysine 81). Lysine 91 is covalently cross-linked (Glycyl lysine isopeptide (Lys-Gly) (interchain with G-Cter in SUMO2)). Serine 123 carries the post-translational modification Phosphoserine. Positions 136–179 constitute a CSD 2; truncated domain; the sequence is VFYLTYTSEDVEGNVQLETGDKINFVIDNNKHTGAVSARNIMLL. Residues 186–245 form the CSD 3 domain; it reads YQGVVCAMKEAFGFIERGDVVKEIFFHYSEFKGDLETLQPGDDVEFTIKDRNGKEVATDV. Serine 276 carries the post-translational modification Phosphoserine. The CSD 4; truncated domain maps to 297-337; sequence LPFGDKDTKSKVTLLEGDHVRFNISTDRRDKLERATNIEVL. CSD domains are found at residues 349–410 and 447–507; these read EMGV…AIRI and NKGK…ATCV. At serine 514 the chain carries Phosphoserine. Positions 519-579 constitute a CSD 7 domain; it reads LLGYVATLKD…KGNKVSAEKV (61 aa). Phosphoserine is present on serine 584. CSD domains follow at residues 610–670 and 674–735; these read PTQI…AYNI and RRAT…ACNV. Positions 748 to 789 constitute an SUZ-C domain; the sequence is PRPDRLVNRLKNITLDDASAPRLMVLRQPRGPDNSMGFGAER. A Phosphothreonine modification is found at threonine 761.

This sequence belongs to the UNR family. Component of a multi subunit autoregulatory ribonucleoprotein complex (ARC), at least composed of IGF2BP1, PABPC1 and CSDE1. Interacts with STRAP. Part of a complex associated with the FOS mCRD domain and consisting of PABPC1, PAIP1, HNRPD and SYNCRIP. The interaction with PABPC1 is direct and RNA-independent. Interacts with EIF4ENIF1/4E-T.

Its subcellular location is the cytoplasm. It localises to the stress granule. It is found in the P-body. RNA-binding protein involved in translationally coupled mRNA turnover. Implicated with other RNA-binding proteins in the cytoplasmic deadenylation/translational and decay interplay of the FOS mRNA mediated by the major coding-region determinant of instability (mCRD) domain. Required for efficient formation of stress granules. In Rattus norvegicus (Rat), this protein is Cold shock domain-containing protein E1.